Reading from the N-terminus, the 26-residue chain is MALKAVCVLKGAGETSGTVHFEQEDN.

C7 carries S-palmitoyl cysteine lipidation.

Belongs to the Cu-Zn superoxide dismutase family. As to quaternary structure, homotrimer. Requires Cu cation as cofactor. The cofactor is Zn(2+).

Its subcellular location is the cytoplasm. The protein resides in the nucleus. The enzyme catalyses 2 superoxide + 2 H(+) = H2O2 + O2. In terms of biological role, destroys radicals which are normally produced within the cells and which are toxic to biological systems. The chain is Superoxide dismutase [Cu-Zn] (sod1) from Paralichthys olivaceus (Bastard halibut).